We begin with the raw amino-acid sequence, 332 residues long: Ketol-acid reductoisomerase (NADP(+)) (332 aa).

Residues 1-182 (MAQTWKDTDI…GSARAGLIKT (182 aa)) form the KARI N-terminal Rossmann domain. NADP(+)-binding positions include 25-28 (YGIQ), Lys-48, Ser-53, and 83-86 (DMIQ). His-108 is a catalytic residue. Position 134 (Gly-134) interacts with NADP(+). Residues 183 to 329 (AFKEEVETDW…KEMRKMMWPD (147 aa)) form the KARI C-terminal knotted domain. Residues Asp-191, Glu-195, Glu-227, and Glu-231 each coordinate Mg(2+). Position 252 (Ser-252) interacts with substrate.

This sequence belongs to the ketol-acid reductoisomerase family. Mg(2+) serves as cofactor.

The enzyme catalyses (2R)-2,3-dihydroxy-3-methylbutanoate + NADP(+) = (2S)-2-acetolactate + NADPH + H(+). The catalysed reaction is (2R,3R)-2,3-dihydroxy-3-methylpentanoate + NADP(+) = (S)-2-ethyl-2-hydroxy-3-oxobutanoate + NADPH + H(+). The protein operates within amino-acid biosynthesis; L-isoleucine biosynthesis; L-isoleucine from 2-oxobutanoate: step 2/4. It participates in amino-acid biosynthesis; L-valine biosynthesis; L-valine from pyruvate: step 2/4. In terms of biological role, involved in the biosynthesis of branched-chain amino acids (BCAA). Catalyzes an alkyl-migration followed by a ketol-acid reduction of (S)-2-acetolactate (S2AL) to yield (R)-2,3-dihydroxy-isovalerate. In the isomerase reaction, S2AL is rearranged via a Mg-dependent methyl migration to produce 3-hydroxy-3-methyl-2-ketobutyrate (HMKB). In the reductase reaction, this 2-ketoacid undergoes a metal-dependent reduction by NADPH to yield (R)-2,3-dihydroxy-isovalerate. The sequence is that of Ketol-acid reductoisomerase (NADP(+)) from Nitrosopumilus maritimus (strain SCM1).